The chain runs to 78 residues: Putative gastrointestinal growth factor xP1 (78 aa).

An N-terminal signal peptide occupies residues 1 to 23 (MNYKVFCLVAIALIVGSIGSANG). One can recognise a P-type domain in the interval 30 to 73 (EQCSVERLARVNCGYSGITPQECTKQGCCFDSTIQDAPWCFYPR). 3 cysteine pairs are disulfide-bonded: cysteine 32–cysteine 58, cysteine 42–cysteine 57, and cysteine 52–cysteine 69.

In terms of tissue distribution, stomach mucosa.

The protein localises to the secreted. Its function is as follows. May act as a growth factor. The chain is Putative gastrointestinal growth factor xP1 (p1) from Xenopus laevis (African clawed frog).